A 233-amino-acid chain; its full sequence is Archaetidylserine synthase (233 aa).

A run of 8 helical transmembrane segments spans residues 7 to 27 (ITSF…SGYL), 29 to 49 (ILLS…LAVL), 75 to 95 (SLSD…SAAV), 102 to 122 (ILVG…FNVL), 126 to 146 (GKNF…SFYL), 147 to 167 (TGFY…VLMI), 180 to 200 (ASTA…VEIL), and 206 to 226 (VAGP…AVPI).

The protein belongs to the CDP-alcohol phosphatidyltransferase class-I family.

The protein resides in the membrane. It carries out the reaction CDP-2,3-bis-O-(geranylgeranyl)-sn-glycerol + L-serine = archaetidylserine + CMP + H(+). The catalysed reaction is CDP-2,3-bis-O-(phytanyl)-sn-glycerol + L-serine = 2,3-bis-O-phytanyl-sn-glycero-3-phospho-L-serine + CMP + H(+). Its pathway is membrane lipid metabolism; glycerophospholipid metabolism. With respect to regulation, activated by Mn(2+) ions. Functionally, involved in the lipid biosynthesis. Catalyzes the formation of unsaturated archaetidylserine from CDP-unsaturated archaeol and L-serine. Activity with ester-linked substrate analogs containing straight aliphatic chains (typical bacterial substrates) is two to three times higher than that with the corresponding ether-type substrate (typical archaeal substrates). Both enantiomers of CDP-unsaturated archaeols with ether-linked geranylgeranyl chains and CDP-saturated archaeol with ether-linked phytanyl chains are similarly active. The enzyme also accepts D-serine, although activity is only about third of that with L-serine. The chain is Archaetidylserine synthase from Methanothermobacter thermautotrophicus (strain ATCC 29096 / DSM 1053 / JCM 10044 / NBRC 100330 / Delta H) (Methanobacterium thermoautotrophicum).